Here is a 183-residue protein sequence, read N- to C-terminus: uncharacterized protein (183 aa).

The tract at residues 54–89 (DAASQSDPLPGGDGLTGGDSKATRRTSPRYYPPSEA) is disordered.

This is an uncharacterized protein from Human cytomegalovirus (strain AD169) (HHV-5).